Reading from the N-terminus, the 1097-residue chain is Chitin synthase 2 (1097 aa).

A disordered region spans residues 1–46 (MAGYGHSTAGGFGSGSGSGPPGPQYMLPQYDEGDDPDADATPAGQG). Residues 1 to 748 (MAGYGHSTAG…HVEFLYHLLQ (748 aa)) are Extracellular-facing. Residues 8 to 19 (TAGGFGSGSGSG) show a composition bias toward gly residues. Residue Asn55 is glycosylated (N-linked (GlcNAc...) asparagine). 2 disordered regions span residues 148–217 (SGHG…YPRY) and 259–322 (SSQI…RPPQ). Positions 284–296 (STTYSSNTGTSAS) are enriched in polar residues. The segment covering 299–313 (DKFEHYGPIPEEGKH) has biased composition (basic and acidic residues). Residues Asn416 and Asn424 are each glycosylated (N-linked (GlcNAc...) asparagine). The helical transmembrane segment at 749–769 (LLFTYFSLANFYLAFYFIAGG) threads the bilayer. Over 770 to 786 (LADPHVDPFNSDGHVAR) the chain is Cytoplasmic. Residues 787–807 (IIFNILRYVCVLLICTQFILS) form a helical membrane-spanning segment. The Extracellular segment spans residues 808-821 (LGNRPQGAKRMYLA). A helical membrane pass occupies residues 822-842 (SMIIYAVIMVYTTFATIFIVV). Residues 843–865 (RQIQPSQKSDDKPDLELGNNVFT) are Cytoplasmic-facing. Residues 866–886 (NLIVSVASTLGLYFVMSFLYL) form a helical membrane-spanning segment. Over 887 to 894 (DPWHMFTS) the chain is Extracellular. A helical transmembrane segment spans residues 895-915 (AIQYFVLLPSYICTLQIYAFC). Residues 916–993 (NTHDVTWGTK…QDYYKSVRTY (78 aa)) are Cytoplasmic-facing. A helical membrane pass occupies residues 994–1014 (MVVSWMVANATLAMAVSEAYG). Over 1015–1025 (DSEIGDNFYLR) the chain is Extracellular. The chain crosses the membrane as a helical span at residues 1026-1046 (FILWAVAALALFRALGSTTFA). Residues 1047–1097 (AINLVSALVEGRVRLRLNMKGFRWIKEKWGDADVKGKFEGLGDRARGLARR) are Cytoplasmic-facing.

It belongs to the chitin synthase family.

It is found in the cell membrane. The enzyme catalyses [(1-&gt;4)-N-acetyl-beta-D-glucosaminyl](n) + UDP-N-acetyl-alpha-D-glucosamine = [(1-&gt;4)-N-acetyl-beta-D-glucosaminyl](n+1) + UDP + H(+). Its function is as follows. Polymerizes chitin, a structural polymer of the cell wall and septum, by transferring the sugar moiety of UDP-GlcNAc to the non-reducing end of the growing chitin polymer. The sequence is that of Chitin synthase 2 (chs-2) from Neurospora crassa (strain ATCC 24698 / 74-OR23-1A / CBS 708.71 / DSM 1257 / FGSC 987).